We begin with the raw amino-acid sequence, 206 residues long: Triosephosphate isomerase (206 aa).

His76 (electrophile) is an active-site residue. Glu146 functions as the Proton acceptor in the catalytic mechanism.

It belongs to the triosephosphate isomerase family. As to quaternary structure, homodimer.

The enzyme catalyses D-glyceraldehyde 3-phosphate = dihydroxyacetone phosphate. It participates in carbohydrate biosynthesis; gluconeogenesis. It functions in the pathway carbohydrate degradation; glycolysis; D-glyceraldehyde 3-phosphate from glycerone phosphate: step 1/1. The sequence is that of Triosephosphate isomerase (Tpi) from Aedes togoi (Mosquito).